The chain runs to 591 residues: L-fucose isomerase (591 aa).

Active-site proton acceptor residues include Glu-337 and Asp-361. The Mn(2+) site is built by Glu-337, Asp-361, and His-528.

This sequence belongs to the L-fucose isomerase family. Homohexamer. Requires Mn(2+) as cofactor.

It localises to the cytoplasm. The catalysed reaction is L-fucose = L-fuculose. It functions in the pathway carbohydrate degradation; L-fucose degradation; L-lactaldehyde and glycerone phosphate from L-fucose: step 1/3. Its function is as follows. Converts the aldose L-fucose into the corresponding ketose L-fuculose. This Escherichia coli O157:H7 (strain EC4115 / EHEC) protein is L-fucose isomerase.